The chain runs to 274 residues: Undecaprenyl-diphosphatase (274 aa).

The next 6 helical transmembrane spans lie at 44 to 64 (AKVF…LVYW), 85 to 105 (LNVV…GKMI), 109 to 129 (LFIP…ILWA), 185 to 205 (ATDF…AYSL), 214 to 234 (VADI…AWLC), and 247 to 267 (FIPF…TAWT).

This sequence belongs to the UppP family.

Its subcellular location is the cell inner membrane. It catalyses the reaction di-trans,octa-cis-undecaprenyl diphosphate + H2O = di-trans,octa-cis-undecaprenyl phosphate + phosphate + H(+). Functionally, catalyzes the dephosphorylation of undecaprenyl diphosphate (UPP). Confers resistance to bacitracin. The sequence is that of Undecaprenyl-diphosphatase from Variovorax paradoxus (strain S110).